The chain runs to 213 residues: ATP-dependent Clp protease proteolytic subunit 3 (213 aa).

The active-site Nucleophile is the Ser107. The active site involves His132.

Belongs to the peptidase S14 family. In terms of assembly, fourteen ClpP subunits assemble into 2 heptameric rings which stack back to back to give a disk-like structure with a central cavity, resembling the structure of eukaryotic proteasomes.

It localises to the cytoplasm. The catalysed reaction is Hydrolysis of proteins to small peptides in the presence of ATP and magnesium. alpha-casein is the usual test substrate. In the absence of ATP, only oligopeptides shorter than five residues are hydrolyzed (such as succinyl-Leu-Tyr-|-NHMec, and Leu-Tyr-Leu-|-Tyr-Trp, in which cleavage of the -Tyr-|-Leu- and -Tyr-|-Trp bonds also occurs).. In terms of biological role, cleaves peptides in various proteins in a process that requires ATP hydrolysis. Has a chymotrypsin-like activity. Plays a major role in the degradation of misfolded proteins. The protein is ATP-dependent Clp protease proteolytic subunit 3 of Frankia casuarinae (strain DSM 45818 / CECT 9043 / HFP020203 / CcI3).